A 346-amino-acid chain; its full sequence is S-adenosylmethionine:tRNA ribosyltransferase-isomerase (346 aa).

Belongs to the QueA family. Monomer.

The protein resides in the cytoplasm. The catalysed reaction is 7-aminomethyl-7-carbaguanosine(34) in tRNA + S-adenosyl-L-methionine = epoxyqueuosine(34) in tRNA + adenine + L-methionine + 2 H(+). Its pathway is tRNA modification; tRNA-queuosine biosynthesis. Functionally, transfers and isomerizes the ribose moiety from AdoMet to the 7-aminomethyl group of 7-deazaguanine (preQ1-tRNA) to give epoxyqueuosine (oQ-tRNA). The protein is S-adenosylmethionine:tRNA ribosyltransferase-isomerase of Shewanella frigidimarina (strain NCIMB 400).